The primary structure comprises 64 residues: Large ribosomal subunit protein bL33c (64 aa).

The protein belongs to the bacterial ribosomal protein bL33 family.

The protein resides in the plastid. The protein localises to the cyanelle. The protein is Large ribosomal subunit protein bL33c (rpl33) of Cyanophora paradoxa.